Consider the following 561-residue polypeptide: Arf-GAP domain and FG repeat-containing protein 1 (561 aa).

Residues 11 to 135 (EKHLKMLRDM…WYVPPEQAKV (125 aa)) enclose the Arf-GAP domain. A C4-type zinc finger spans residues 29-52 (CFDCDQRGPTYVNMTVGSFVCTSC). Ser167 carries the phosphoserine modification. A disordered region spans residues 170–193 (ALHLNKGTPSQSPVVGRSQGQQQE). Residues 176 to 191 (GTPSQSPVVGRSQGQQ) are compositionally biased toward polar residues. Thr177 is subject to Phosphothreonine. Phosphoserine is present on residues Ser181 and Ser362. An O-linked (GlcNAc) serine glycan is attached at Ser367. Residues 413 to 433 (SAQTQPASSGPAPFGATPSTN) form a disordered region.

Interacts with FCHO1. Interacts with EPS15R and EPS15. In terms of processing, O-glycosylated. In terms of tissue distribution, expressed in the testes (at protein level).

It is found in the nucleus. The protein localises to the cytoplasmic vesicle. Required for vesicle docking or fusion during acrosome biogenesis. May play a role in RNA trafficking or localization. This chain is Arf-GAP domain and FG repeat-containing protein 1 (Agfg1), found in Mus musculus (Mouse).